A 1405-amino-acid polypeptide reads, in one-letter code: Tonsoku-like protein (1405 aa).

TPR repeat units lie at residues alanine 23–methionine 56, alanine 63–leucine 96, alanine 163–histidine 196, histidine 203–phenylalanine 237, cysteine 245–aspartate 278, lysine 314–asparagine 347, and valine 355–alanine 388. The LRR 1 repeat unit spans residues isoleucine 153–glutamate 181. Residues methionine 439 to lysine 465 form an LRR 2 repeat. Residues lysine 465 to lysine 535 are disordered. Positions leucine 469–aspartate 483 are enriched in acidic residues. 3 ANK repeats span residues lysine 538–valine 567, alanine 571–isoleucine 600, and aspartate 609–valine 638. 3 disordered regions span residues phenylalanine 695–arginine 753, lysine 806–leucine 827, and threonine 841–glutamine 880. Serine 707 and serine 709 each carry phosphoserine. Over residues leucine 813 to phenylalanine 822 the composition is skewed to basic and acidic residues. The segment covering threonine 841–glutamine 850 has biased composition (polar residues). The segment covering serine 859–serine 874 has biased composition (low complexity). 4 positions are modified to phosphoserine: serine 893, serine 895, serine 899, and serine 902. 6 LRR repeats span residues glutamine 1085–lysine 1108, leucine 1113–glycine 1137, leucine 1143–lysine 1166, leucine 1186–glutamine 1211, alanine 1287–aspartate 1311, and leucine 1333–methionine 1357.

This sequence belongs to the Tonsoku family.

It is found in the nucleus. It localises to the nucleoplasm. The protein resides in the chromosome. Its function is as follows. Histone reader involved in homologous recombination-mediated repair of double-strand breaks (DSBs) at stalled or collapsed replication forks. Specifically recognizes and binds histone H3.1. This is Tonsoku-like protein from Drosophila melanogaster (Fruit fly).